The primary structure comprises 552 residues: L-ascorbate oxidase (552 aa).

Plastocyanin-like domains are found at residues 1–122 and 134–300; these read SQIR…LIVD and DGEI…NYLP. 3 cysteine pairs are disulfide-bonded: Cys19/Cys201, Cys81/Cys538, and Cys180/Cys193. Residues His60 and His62 each coordinate Cu cation. An N-linked (GlcNAc...) asparagine glycan is attached at Asn92. The Cu cation site is built by His104 and His106. Residues Asn325 and Asn440 are each glycosylated (N-linked (GlcNAc...) asparagine). The region spanning 344–523 is the Plastocyanin-like 3 domain; that stretch reads NRRIFLLNTQ…HMGMGVVFAE (180 aa). Cu cation is bound by residues His445, His448, His450, His506, Cys507, His508, His512, and Met517.

The protein belongs to the multicopper oxidase family. Dimer. It depends on Cu cation as a cofactor.

It is found in the secreted. The enzyme catalyses 4 L-ascorbate + O2 = 4 monodehydro-L-ascorbate radical + 2 H2O. Its function is as follows. May be involved in a redox system involving ascorbic acid. This Cucurbita pepo var. melopepo (Zucchini) protein is L-ascorbate oxidase.